The sequence spans 420 residues: Tyrosine-protein phosphatase non-receptor type 20 (420 aa).

Residues 1 to 11 show a composition bias toward basic and acidic residues; it reads MSSPRDFRAEP. Disordered regions lie at residues 1 to 47 and 68 to 108; these read MSSP…VFEN and DVFE…SQAL. The span at 31–41 shows a compositional bias: polar residues; sequence LPSSSQENTPR. A phosphoserine mark is found at Ser-76 and Ser-120. A Tyrosine-protein phosphatase domain is found at 159–412; sequence IMQEFMALEL…HFCYDIVLEV (254 aa). Residues Asp-323, 353–359, and Gln-397 contribute to the substrate site; that span reads CSAGIGR. Catalysis depends on Cys-353, which acts as the Phosphocysteine intermediate.

Belongs to the protein-tyrosine phosphatase family. Non-receptor class subfamily. In terms of tissue distribution, present in many cell lines (at protein level). Widely expressed.

The protein localises to the nucleus. It localises to the cytoplasm. It is found in the cytoskeleton. The protein resides in the microtubule organizing center. Its subcellular location is the centrosome. It carries out the reaction O-phospho-L-tyrosyl-[protein] + H2O = L-tyrosyl-[protein] + phosphate. In terms of biological role, tyrosine-protein phosphatase targeted to sites of actin polymerization in response of varied extracellular stimuli. Has tyrosine phosphatase activity towards various tyrosyl phosphorylated substrates. This is Tyrosine-protein phosphatase non-receptor type 20 from Homo sapiens (Human).